Consider the following 1477-residue polypeptide: Inositol hexakisphosphate and diphosphoinositol-pentakisphosphate kinase 1 (1477 aa).

The interval 27–47 is disordered; that stretch reads TRGLGMRPEESDSELLEDEED. Residues 37 to 47 show a composition bias toward acidic residues; that stretch reads SDSELLEDEED. Substrate is bound at residue 64-65; it reads KK. Residues Arg145, Lys198, His205, Arg224, 248-251, and 257-259 contribute to the ATP site; these read EEFM and DVK. 224–225 contacts substrate; that stretch reads RK. Residues Lys259 and Arg273 each coordinate substrate. ATP-binding positions include Ser275, Asp320, and 332–334; that span reads DVN. Residue 337 to 340 coordinates substrate; that stretch reads SFVK. The segment at 382–453 is polyphosphoinositide-binding domain; sequence PTTSGTMMEL…VLDITRLLLA (72 aa). The interval 910–1016 is disordered; sequence KGVEEEGSAP…PTEMKQSGLG (107 aa). Ser940 and Ser983 each carry phosphoserine. Polar residues predominate over residues 1001 to 1016; the sequence is FSSSRPPTEMKQSGLG. Phosphoserine is present on residues Ser1033, Ser1069, Ser1141, and Ser1148. 2 disordered regions span residues 1131–1248 and 1438–1477; these read HSNQ…KPCQ and REEV…SFSH. Positions 1164 to 1182 are enriched in low complexity; sequence SSGPSSTVSSAGPSSPTAV. The segment covering 1446–1460 has biased composition (polar residues); sequence CPPSNANPQSQSLAP.

This sequence belongs to the histidine acid phosphatase family. VIP1 subfamily.

The protein resides in the cytoplasm. Its subcellular location is the cytosol. It is found in the cell membrane. It catalyses the reaction 1D-myo-inositol hexakisphosphate + ATP = 1-diphospho-1D-myo-inositol 2,3,4,5,6-pentakisphosphate + ADP. It carries out the reaction 5-diphospho-1D-myo-inositol 1,2,3,4,6-pentakisphosphate + ATP + H(+) = 1,5-bis(diphospho)-1D-myo-inositol 2,3,4,6-tetrakisphosphate + ADP. In terms of biological role, bifunctional inositol kinase that acts in concert with the IP6K kinases IP6K1, IP6K2 and IP6K3 to synthesize the diphosphate group-containing inositol pyrophosphates diphosphoinositol pentakisphosphate, PP-InsP5, and bis-diphosphoinositol tetrakisphosphate, (PP)2-InsP4. PP-InsP5 and (PP)2-InsP4, also respectively called InsP7 and InsP8, regulate a variety of cellular processes, including apoptosis, vesicle trafficking, cytoskeletal dynamics, exocytosis, insulin signaling and neutrophil activation. Phosphorylates inositol hexakisphosphate (InsP6) at position 1 to produce PP-InsP5 which is in turn phosphorylated by IP6Ks to produce (PP)2-InsP4. Alternatively, phosphorylates PP-InsP5 at position 1, produced by IP6Ks from InsP6, to produce (PP)2-InsP4. Activated when cells are exposed to hyperosmotic stress. This is Inositol hexakisphosphate and diphosphoinositol-pentakisphosphate kinase 1 from Bos taurus (Bovine).